We begin with the raw amino-acid sequence, 579 residues long: Vitamin B6 transporter TPN1 (579 aa).

Transmembrane regions (helical) follow at residues T99–F119, L123–M143, L158–W178, P199–I219, V222–I242, L275–P295, I303–L323, V363–F383, I395–G415, I422–F442, F520–G540, and F546–Y566.

This sequence belongs to the purine-cytosine permease (2.A.39) family.

It localises to the membrane. Functionally, thiamine-regulated, high affinity import carrier of pyridoxine, pyridoxal and pyridoxamine. This chain is Vitamin B6 transporter TPN1 (TPN1), found in Saccharomyces cerevisiae (Baker's yeast).